Reading from the N-terminus, the 351-residue chain is UDP-3-O-acylglucosamine N-acyltransferase (351 aa).

The Proton acceptor role is filled by His-240.

This sequence belongs to the transferase hexapeptide repeat family. LpxD subfamily. As to quaternary structure, homotrimer.

It catalyses the reaction a UDP-3-O-[(3R)-3-hydroxyacyl]-alpha-D-glucosamine + a (3R)-hydroxyacyl-[ACP] = a UDP-2-N,3-O-bis[(3R)-3-hydroxyacyl]-alpha-D-glucosamine + holo-[ACP] + H(+). It participates in bacterial outer membrane biogenesis; LPS lipid A biosynthesis. In terms of biological role, catalyzes the N-acylation of UDP-3-O-acylglucosamine using 3-hydroxyacyl-ACP as the acyl donor. Is involved in the biosynthesis of lipid A, a phosphorylated glycolipid that anchors the lipopolysaccharide to the outer membrane of the cell. In Methylacidiphilum infernorum (isolate V4) (Methylokorus infernorum (strain V4)), this protein is UDP-3-O-acylglucosamine N-acyltransferase.